A 575-amino-acid chain; its full sequence is Sclareol synthase, chloroplastic (575 aa).

The transit peptide at 1–51 directs the protein to the chloroplast; the sequence is MSLAFNVGVTPFSGQRVGSRKEKFPVQGFPVTTPNRSRLIVNCSLTTIDFM. Residues Asp-329, Asp-333, Asn-473, Ser-477, and Glu-481 each contribute to the Mg(2+) site. The DDXXD motif motif lies at 329-333; the sequence is DDFFD.

This sequence belongs to the terpene synthase family.

It localises to the plastid. It is found in the chloroplast. It carries out the reaction 8-hydroxycopalyl diphosphate + H2O = sclareol + diphosphate. It participates in secondary metabolite biosynthesis; terpenoid biosynthesis. Functionally, involved in the biosynthesis of labdane-type diterpenoid including sclareol, a diterpene-diol that is used as fragrance and flavoring, and has anticancer effects (able to kill leukemic and colon cancer cells by apoptosis). Sclareol can also be used as synthesis precursor of ambergris substitution fragance products such as ambrox. Terpene synthase that catalyzes the conversion of 8-hydroxy-copalyl diphosphate to sclareol. This Salvia sclarea (Clary sage) protein is Sclareol synthase, chloroplastic.